The following is a 403-amino-acid chain: Ribosomal RNA large subunit methyltransferase I (403 aa).

Positions 9 to 88 (YPRLVLSKGR…ESIDIAFFTR (80 aa)) constitute a PUA domain.

It belongs to the methyltransferase superfamily. RlmI family.

The protein localises to the cytoplasm. It catalyses the reaction cytidine(1962) in 23S rRNA + S-adenosyl-L-methionine = 5-methylcytidine(1962) in 23S rRNA + S-adenosyl-L-homocysteine + H(+). Its function is as follows. Specifically methylates the cytosine at position 1962 (m5C1962) of 23S rRNA. This is Ribosomal RNA large subunit methyltransferase I from Salmonella choleraesuis (strain SC-B67).